A 478-amino-acid chain; its full sequence is tRNA(Ile)-lysidine synthase (478 aa).

27 to 32 (SGGSDS) serves as a coordination point for ATP.

The protein belongs to the tRNA(Ile)-lysidine synthase family.

Its subcellular location is the cytoplasm. The enzyme catalyses cytidine(34) in tRNA(Ile2) + L-lysine + ATP = lysidine(34) in tRNA(Ile2) + AMP + diphosphate + H(+). In terms of biological role, ligates lysine onto the cytidine present at position 34 of the AUA codon-specific tRNA(Ile) that contains the anticodon CAU, in an ATP-dependent manner. Cytidine is converted to lysidine, thus changing the amino acid specificity of the tRNA from methionine to isoleucine. This chain is tRNA(Ile)-lysidine synthase, found in Rickettsia conorii (strain ATCC VR-613 / Malish 7).